A 962-amino-acid chain; its full sequence is MNFLRGVMGGQSAGPQHTEAETIQKLCDRVASSTLLDDRRNAVRALKSLSKKYRLEVGIQAMEHLIHVLQTDRSDSEIIGYALDTLYNIISNEEEEEVEENSTRQSEDLGSQFTEIFIKQQENVTLLLSLLEEFDFHVRWPGVKLLTSLLKQLGPQVQQIILVSPMGVSRLMDLLADSREVIRNDGVLLLQALTRSNGAIQKIVAFENAFERLLDIISEEGNSDGGIVVEDCLILLQNLLKNNNSNQNFFKEGSYIQRMKPWFEVGDENSGWSAQKVTNLHLMLQLVRVLVSPTNPPGATSSCQKAMFQCGLLQQLCTILMATGVPADILTETINTVSEVIRGCQVNQDYFASVNAPSNPPRPAIVVLLMSMVNERQPFVLRCAVLYCFQCFLYKNQKGQGEIVSTLLPSTIDATGNSVSAGQLLCGGLFSTDSLSNWCAAVALAHALQENATQKEQLLRVQLATSIGNPPVSLLQQCTNILSQGSKIQTRVGLLMLLCTWLSNCPIAVTHFLHNSANVPFLTGQIAENLGEEEQLVQGLCALLLGISIYFNDNSLESYMKEKLKQLIEKRIGKENFIEKLGFISKHELYSRASQKPQPNFPSPEYMIFDHEFTKLVKELEGVITKAIYKSSEEDKKEEEVKKTLEQHDNIVTHYKNMIREQDLQLEELRQQVSTLKCQNEQLQTAVTQQVSQIQQHKDQYNLLKIQLGKDNQHQGSYSEGAQMNGIQPEEIGRLREEIEELKRNQELLQSQLTEKDSMIENMKSSQTSGTNEQSSAIVSARDSEQVAELKQELATLKSQLNSQSVEITKLQTEKQELLQKTEAFAKSVEVQGETETIIATKTTDVEGRLSALLQETKELKNEIKALSEERTAIKEQLDSSNSTIAILQTEKDKLELEITDSKKEQDDLLVLLADQDQKILSLKNKLKDLGHPVEEEDELESGDQEDEDDESEDPGKDLDHI.

Positions 1-637 are globular head; that stretch reads MNFLRGVMGG…IYKSSEEDKK (637 aa). 12 ARM repeats span residues 20-60, 61-121, 123-163, 166-207, 208-253, 255-310, 311-354, 363-408, 420-459, 473-513, 518-571, and 573-630; these read AETI…VGIQ, AMEH…IKQQ, NVTL…IILV, MGVS…VAFE, NAFE…FKEG, YIQR…MFQC, GLLQ…FASV, PAIV…STLL, SAGQ…EQLL, SLLQ…THFL, NVPF…IEKR, and GKEN…AIYK. The residue at position 50 (Ser50) is a Phosphoserine. Lys202 carries the N6-acetyllysine modification. Positions 638 to 930 form a coiled coil; that stretch reads EEEVKKTLEQ…LSLKNKLKDL (293 aa). Positions 763-778 are enriched in polar residues; the sequence is MKSSQTSGTNEQSSAI. 2 disordered regions span residues 763-783 and 926-962; these read MKSS…SARD and KLKD…LDHI. Acidic residues predominate over residues 935 to 953; it reads EEEDELESGDQEDEDDESE. Phosphoserine is present on residues Ser942 and Ser952.

This sequence belongs to the VDP/USO1/EDE1 family. Homodimer. Dimerizes by parallel association of the tails, resulting in an elongated structure with two globular head domains side by side, and a long rod-like tail structure. Interacts with MIF. Post-translationally, phosphorylated in a cell cycle-specific manner; phosphorylated in interphase but not in mitotic cells. Dephosphorylated protein associates with the Golgi membrane; phosphorylation promotes dissociation.

It is found in the cytoplasm. It localises to the cytosol. Its subcellular location is the golgi apparatus membrane. General vesicular transport factor required for intercisternal transport in the Golgi stack; it is required for transcytotic fusion and/or subsequent binding of the vesicles to the target membrane. May well act as a vesicular anchor by interacting with the target membrane and holding the vesicular and target membranes in proximity. The polypeptide is General vesicular transport factor p115 (USO1) (Homo sapiens (Human)).